A 599-amino-acid chain; its full sequence is Aspartate--tRNA(Asp/Asn) ligase (599 aa).

Glutamate 174 is a binding site for L-aspartate. Residues 198–201 (QLFK) are aspartate. Position 220 (arginine 220) interacts with L-aspartate. ATP contacts are provided by residues 220–222 (RDE) and glutamine 229. Histidine 457 serves as a coordination point for L-aspartate. Glutamate 491 serves as a coordination point for ATP. Residue arginine 498 coordinates L-aspartate. 543–546 (GLDR) contributes to the ATP binding site.

The protein belongs to the class-II aminoacyl-tRNA synthetase family. Type 1 subfamily. Homodimer.

It localises to the cytoplasm. The catalysed reaction is tRNA(Asx) + L-aspartate + ATP = L-aspartyl-tRNA(Asx) + AMP + diphosphate. Its function is as follows. Aspartyl-tRNA synthetase with relaxed tRNA specificity since it is able to aspartylate not only its cognate tRNA(Asp) but also tRNA(Asn). Reaction proceeds in two steps: L-aspartate is first activated by ATP to form Asp-AMP and then transferred to the acceptor end of tRNA(Asp/Asn). The sequence is that of Aspartate--tRNA(Asp/Asn) ligase from Paraburkholderia phymatum (strain DSM 17167 / CIP 108236 / LMG 21445 / STM815) (Burkholderia phymatum).